The sequence spans 599 residues: MKNIRNFSIIAHIDHGKSTLSDRIIQICGGLSDREMEAQVLDSMDLERERGITIKAQSVTLDFKASDGETYQLNFIDTPGHVDFSYEVSRSLAACEGALLVVDAGQGVEAQTLANCYTAMEMDLEVVPVLNKIDLPAADPERVAEEIEDIVGIDATDAVRCSAKTGVGVTDVLERLVRDIPPPQGDPDGPLQALIIDSWFDNYLGVVSLVRIKNGTMRKGDKIKVMSTGQTYNADRLGIFTPKQVDRTELKCGEVGWLVCAIKDILGAPVGDTLTSARNPAEKALPGFKKVKPQVYAGLFPVSSDDYESFRDALGKLSLNDASLFYEPESSSALGFGFRCGFLGLLHMEIIQERLEREYDLDLITTAPTVVYEVETTAKETIYVDSPSKLPPLNNIYELREPIAECHMLLPQAYLGNVITLCIEKRGVQTNMVYHGNQVALTYEIPMAEVVLDFFDRLKSTSRGYASLDYNFKRFQASDMVRVDVLINNERVDALALITHRDNSQSRGRELVEKMKDLIPRQQFDIAIQAAIGTHIIARSTVKQLRKNVLAKCYGGDISRKKKLLQKQKEGKKRMKQIGNVELPQEAFLAILHVGKDNK.

The 183-residue stretch at 2–184 (KNIRNFSIIA…RLVRDIPPPQ (183 aa)) folds into the tr-type G domain. Residues 14–19 (DHGKST) and 131–134 (NKID) each bind GTP.

The protein belongs to the TRAFAC class translation factor GTPase superfamily. Classic translation factor GTPase family. LepA subfamily.

Its subcellular location is the cell inner membrane. The enzyme catalyses GTP + H2O = GDP + phosphate + H(+). Functionally, required for accurate and efficient protein synthesis under certain stress conditions. May act as a fidelity factor of the translation reaction, by catalyzing a one-codon backward translocation of tRNAs on improperly translocated ribosomes. Back-translocation proceeds from a post-translocation (POST) complex to a pre-translocation (PRE) complex, thus giving elongation factor G a second chance to translocate the tRNAs correctly. Binds to ribosomes in a GTP-dependent manner. In Salmonella agona (strain SL483), this protein is Elongation factor 4.